The primary structure comprises 314 residues: Ribonuclease Z (314 aa).

Zn(2+) is bound by residues His-62, His-64, Asp-66, His-67, His-144, Asp-215, and His-273. Catalysis depends on Asp-66, which acts as the Proton acceptor.

The protein belongs to the RNase Z family. In terms of assembly, homodimer. It depends on Zn(2+) as a cofactor.

The catalysed reaction is Endonucleolytic cleavage of RNA, removing extra 3' nucleotides from tRNA precursor, generating 3' termini of tRNAs. A 3'-hydroxy group is left at the tRNA terminus and a 5'-phosphoryl group is left at the trailer molecule.. In terms of biological role, zinc phosphodiesterase, which displays some tRNA 3'-processing endonuclease activity. Probably involved in tRNA maturation, by removing a 3'-trailer from precursor tRNA. The polypeptide is Ribonuclease Z (Prochlorococcus marinus (strain NATL2A)).